The following is a 126-amino-acid chain: Holo-[acyl-carrier-protein] synthase (126 aa).

Asp-8 and Glu-50 together coordinate Mg(2+).

Belongs to the P-Pant transferase superfamily. AcpS family. It depends on Mg(2+) as a cofactor.

Its subcellular location is the cytoplasm. The catalysed reaction is apo-[ACP] + CoA = holo-[ACP] + adenosine 3',5'-bisphosphate + H(+). Its function is as follows. Transfers the 4'-phosphopantetheine moiety from coenzyme A to a Ser of acyl-carrier-protein. This Micrococcus luteus (strain ATCC 4698 / DSM 20030 / JCM 1464 / CCM 169 / CCUG 5858 / IAM 1056 / NBRC 3333 / NCIMB 9278 / NCTC 2665 / VKM Ac-2230) (Micrococcus lysodeikticus) protein is Holo-[acyl-carrier-protein] synthase.